A 261-amino-acid chain; its full sequence is Type III pantothenate kinase (261 aa).

Residue 6–13 (DAGNSNIT) coordinates ATP. Residues Tyr100 and 107 to 110 (GADR) each bind substrate. Catalysis depends on Asp109, which acts as the Proton acceptor. Asp129 is a K(+) binding site. Residue Thr132 coordinates ATP. Thr184 contributes to the substrate binding site.

The protein belongs to the type III pantothenate kinase family. As to quaternary structure, homodimer. NH4(+) is required as a cofactor. It depends on K(+) as a cofactor.

Its subcellular location is the cytoplasm. It carries out the reaction (R)-pantothenate + ATP = (R)-4'-phosphopantothenate + ADP + H(+). The protein operates within cofactor biosynthesis; coenzyme A biosynthesis; CoA from (R)-pantothenate: step 1/5. Functionally, catalyzes the phosphorylation of pantothenate (Pan), the first step in CoA biosynthesis. The polypeptide is Type III pantothenate kinase (Solibacter usitatus (strain Ellin6076)).